Consider the following 153-residue polypeptide: Probable Brix domain-containing ribosomal biogenesis protein (153 aa).

The region spanning 1–153 (MQVLTTSRKP…RILKISRSSR (153 aa)) is the Brix domain.

Functionally, probably involved in the biogenesis of the ribosome. The protein is Probable Brix domain-containing ribosomal biogenesis protein of Archaeoglobus fulgidus (strain ATCC 49558 / DSM 4304 / JCM 9628 / NBRC 100126 / VC-16).